We begin with the raw amino-acid sequence, 275 residues long: 1-deoxy-11-beta-hydroxypentalenate dehydrogenase (275 aa).

Residue 12-36 (GAASGIGLALSARFARAGAGVVMAD) coordinates NAD(+). S144 contacts substrate. Residue Y157 is the Proton acceptor of the active site. K161 serves as a coordination point for NAD(+).

It belongs to the short-chain dehydrogenases/reductases (SDR) family.

The enzyme catalyses 1-deoxy-11beta-hydroxypentalenate + NAD(+) = 1-deoxy-11-oxopentalenate + NADH + H(+). It functions in the pathway antibiotic biosynthesis; pentalenolactone biosynthesis. Catalyzes the oxidation of 1-deoxy-11-beta-hydroxypentalenic acid to 1-deoxy-11-oxopentalenic acid in the biosynthesis of pentalenolactone antibiotic. The polypeptide is 1-deoxy-11-beta-hydroxypentalenate dehydrogenase (penF) (Streptomyces exfoliatus (Streptomyces hydrogenans)).